A 263-amino-acid chain; its full sequence is Polyamine aminopropyltransferase (263 aa).

Residues 1-221 (MARHPYRRLR…AVMAFQSSPK (221 aa)) form the PABS domain. S-methyl-5'-thioadenosine-binding positions include Asp-98 and 126 to 127 (DG). Asp-144 acts as the Proton acceptor in catalysis.

Belongs to the spermidine/spermine synthase family. In terms of assembly, homodimer or homotetramer.

The protein localises to the cytoplasm. It carries out the reaction S-adenosyl 3-(methylsulfanyl)propylamine + putrescine = S-methyl-5'-thioadenosine + spermidine + H(+). It functions in the pathway amine and polyamine biosynthesis; spermidine biosynthesis; spermidine from putrescine: step 1/1. In terms of biological role, catalyzes the irreversible transfer of a propylamine group from the amino donor S-adenosylmethioninamine (decarboxy-AdoMet) to putrescine (1,4-diaminobutane) to yield spermidine. This is Polyamine aminopropyltransferase from Neisseria meningitidis serogroup A / serotype 4A (strain DSM 15465 / Z2491).